The primary structure comprises 309 residues: Ferrochelatase (309 aa).

Fe cation contacts are provided by His-185 and Glu-262.

This sequence belongs to the ferrochelatase family.

It is found in the cytoplasm. It carries out the reaction heme b + 2 H(+) = protoporphyrin IX + Fe(2+). Its pathway is porphyrin-containing compound metabolism; protoheme biosynthesis; protoheme from protoporphyrin-IX: step 1/1. Catalyzes the ferrous insertion into protoporphyrin IX. In Campylobacter jejuni subsp. jejuni serotype O:23/36 (strain 81-176), this protein is Ferrochelatase.